Consider the following 251-residue polypeptide: Triosephosphate isomerase (251 aa).

Residue 9 to 11 (NWK) coordinates substrate. The Electrophile role is filled by H95. E167 (proton acceptor) is an active-site residue. Residues G173, S212, and 233 to 234 (GG) contribute to the substrate site.

Belongs to the triosephosphate isomerase family. Homodimer.

It localises to the cytoplasm. The catalysed reaction is D-glyceraldehyde 3-phosphate = dihydroxyacetone phosphate. Its pathway is carbohydrate biosynthesis; gluconeogenesis. The protein operates within carbohydrate degradation; glycolysis; D-glyceraldehyde 3-phosphate from glycerone phosphate: step 1/1. In terms of biological role, involved in the gluconeogenesis. Catalyzes stereospecifically the conversion of dihydroxyacetone phosphate (DHAP) to D-glyceraldehyde-3-phosphate (G3P). The protein is Triosephosphate isomerase of Pseudomonas savastanoi pv. phaseolicola (strain 1448A / Race 6) (Pseudomonas syringae pv. phaseolicola (strain 1448A / Race 6)).